We begin with the raw amino-acid sequence, 665 residues long: UvrABC system protein C (665 aa).

The 80-residue stretch at 16–95 folds into the GIY-YIG domain; sequence ESPGVYRFRD…IKQYDPRFNV (80 aa). A UVR domain is found at 208–243; it reads DLMVRRLEREMADASAELEFERAARLRDDLAALRRA. The segment at 470-507 is disordered; it reads EAGVESAGDPATPAGPASTGPGVPDEPRVGTLVDPTTG. Residues 475 to 491 are compositionally biased toward low complexity; it reads SAGDPATPAGPASTGPG.

The protein belongs to the UvrC family. In terms of assembly, interacts with UvrB in an incision complex.

The protein localises to the cytoplasm. The UvrABC repair system catalyzes the recognition and processing of DNA lesions. UvrC both incises the 5' and 3' sides of the lesion. The N-terminal half is responsible for the 3' incision and the C-terminal half is responsible for the 5' incision. This chain is UvrABC system protein C, found in Salinispora tropica (strain ATCC BAA-916 / DSM 44818 / JCM 13857 / NBRC 105044 / CNB-440).